Here is a 181-residue protein sequence, read N- to C-terminus: Large ribosomal subunit protein uL5 (181 aa).

It belongs to the universal ribosomal protein uL5 family. As to quaternary structure, part of the 50S ribosomal subunit; part of the 5S rRNA/L5/L18/L25 subcomplex. Contacts the 5S rRNA and the P site tRNA. Forms a bridge to the 30S subunit in the 70S ribosome.

In terms of biological role, this is one of the proteins that bind and probably mediate the attachment of the 5S RNA into the large ribosomal subunit, where it forms part of the central protuberance. In the 70S ribosome it contacts protein S13 of the 30S subunit (bridge B1b), connecting the 2 subunits; this bridge is implicated in subunit movement. Contacts the P site tRNA; the 5S rRNA and some of its associated proteins might help stabilize positioning of ribosome-bound tRNAs. This is Large ribosomal subunit protein uL5 from Onion yellows phytoplasma (strain OY-M).